The chain runs to 251 residues: B3 domain-containing protein REM7 (251 aa).

DNA-binding regions (TF-B3) lie at residues 11-103 (NSHF…LGPS) and 170-251 (CFVA…SRLN).

Its subcellular location is the nucleus. This chain is B3 domain-containing protein REM7 (REM7), found in Arabidopsis thaliana (Mouse-ear cress).